The sequence spans 95 residues: Aspartyl/glutamyl-tRNA(Asn/Gln) amidotransferase subunit C (95 aa).

Belongs to the GatC family. Heterotrimer of A, B and C subunits.

The catalysed reaction is L-glutamyl-tRNA(Gln) + L-glutamine + ATP + H2O = L-glutaminyl-tRNA(Gln) + L-glutamate + ADP + phosphate + H(+). The enzyme catalyses L-aspartyl-tRNA(Asn) + L-glutamine + ATP + H2O = L-asparaginyl-tRNA(Asn) + L-glutamate + ADP + phosphate + 2 H(+). In terms of biological role, allows the formation of correctly charged Asn-tRNA(Asn) or Gln-tRNA(Gln) through the transamidation of misacylated Asp-tRNA(Asn) or Glu-tRNA(Gln) in organisms which lack either or both of asparaginyl-tRNA or glutaminyl-tRNA synthetases. The reaction takes place in the presence of glutamine and ATP through an activated phospho-Asp-tRNA(Asn) or phospho-Glu-tRNA(Gln). The protein is Aspartyl/glutamyl-tRNA(Asn/Gln) amidotransferase subunit C of Rhizobium rhizogenes (strain K84 / ATCC BAA-868) (Agrobacterium radiobacter).